Reading from the N-terminus, the 150-residue chain is UPF0540 protein At1g62080 (150 aa).

Residues 1–21 (MNATKFLVLLVIGVLCAIVTA) form the signal peptide. Over residues 119–135 (AAAARAKGKVASASRVK) the composition is skewed to low complexity. Residues 119 to 150 (AAAARAKGKVASASRVKGSSEKKKKDRKGKKD) are disordered.

It belongs to the UPF0540 family.

The sequence is that of UPF0540 protein At1g62080 from Arabidopsis thaliana (Mouse-ear cress).